Consider the following 79-residue polypeptide: Dolichyl-diphosphooligosaccharide--protein glycosyltransferase subunit DAD1 (79 aa).

The Lumenal segment spans residues 1 to 19 (AVATALIQVAYMGLVGSFP). A helical transmembrane segment spans residues 20-40 (FNSFLSGVLSCIGTAVLAVCL). The Cytoplasmic portion of the chain corresponds to 41-58 (RIQVNKDNKEFKDLPPER). The chain crosses the membrane as a helical span at residues 59 to 79 (AFADFVLCNLVLHLVIMNFLG).

It belongs to the DAD/OST2 family. As to quaternary structure, component of the oligosaccharyltransferase (OST) complex.

Its subcellular location is the endoplasmic reticulum membrane. It functions in the pathway protein modification; protein glycosylation. In terms of biological role, subunit of the oligosaccharyl transferase (OST) complex that catalyzes the initial transfer of a defined glycan (Glc(3)Man(9)GlcNAc(2) in eukaryotes) from the lipid carrier dolichol-pyrophosphate to an asparagine residue within an Asn-X-Ser/Thr consensus motif in nascent polypeptide chains, the first step in protein N-glycosylation. N-glycosylation occurs cotranslationally and the complex associates with the Sec61 complex at the channel-forming translocon complex that mediates protein translocation across the endoplasmic reticulum (ER). All subunits are required for a maximal enzyme activity. The chain is Dolichyl-diphosphooligosaccharide--protein glycosyltransferase subunit DAD1 (DAD1) from Zea mays (Maize).